A 408-amino-acid chain; its full sequence is Acetate kinase (408 aa).

Residue N10 coordinates Mg(2+). Position 17 (K17) interacts with ATP. R96 lines the substrate pocket. The active-site Proton donor/acceptor is the D153. Residues 213-217 and 288-290 each bind ATP; these read HLGNG and DLR. E393 is a binding site for Mg(2+).

It belongs to the acetokinase family. As to quaternary structure, homodimer. It depends on Mg(2+) as a cofactor. Mn(2+) is required as a cofactor.

Its subcellular location is the cytoplasm. It carries out the reaction acetate + ATP = acetyl phosphate + ADP. It functions in the pathway metabolic intermediate biosynthesis; acetyl-CoA biosynthesis; acetyl-CoA from acetate: step 1/2. Its function is as follows. Catalyzes the formation of acetyl phosphate from acetate and ATP. Can also catalyze the reverse reaction. The protein is Acetate kinase of Borrelia duttonii (strain Ly).